The sequence spans 495 residues: GTPase Der (495 aa).

One can recognise an EngA-type G 1 domain in the interval A3–D178. Residues G9–S16, D57–I61, and N130–D133 each bind GTP. Residues T190–P227 are disordered. Over residues E213–P227 the composition is skewed to acidic residues. An EngA-type G 2 domain is found at L231–S404. GTP is bound by residues G237–S244, D284–V288, and N349–D352. The 85-residue stretch at V405–H489 folds into the KH-like domain.

The protein belongs to the TRAFAC class TrmE-Era-EngA-EngB-Septin-like GTPase superfamily. EngA (Der) GTPase family. As to quaternary structure, associates with the 50S ribosomal subunit.

GTPase that plays an essential role in the late steps of ribosome biogenesis. The polypeptide is GTPase Der (Nitratidesulfovibrio vulgaris (strain DP4) (Desulfovibrio vulgaris)).